The following is a 674-amino-acid chain: Methionine--tRNA ligase (674 aa).

The 'HIGH' region signature appears at Pro-11–His-21. Zn(2+) is bound by residues Cys-142, Cys-145, Cys-155, and Cys-158. Positions Lys-330–Ser-334 match the 'KMSKS' region motif. Lys-333 contributes to the ATP binding site. Positions Asp-574 to Lys-674 constitute a tRNA-binding domain.

The protein belongs to the class-I aminoacyl-tRNA synthetase family. MetG type 1 subfamily. As to quaternary structure, homodimer. Zn(2+) serves as cofactor.

It localises to the cytoplasm. The catalysed reaction is tRNA(Met) + L-methionine + ATP = L-methionyl-tRNA(Met) + AMP + diphosphate. In terms of biological role, is required not only for elongation of protein synthesis but also for the initiation of all mRNA translation through initiator tRNA(fMet) aminoacylation. This Francisella tularensis subsp. tularensis (strain WY96-3418) protein is Methionine--tRNA ligase.